Consider the following 132-residue polypeptide: UPF0299 membrane protein YohJ (132 aa).

Helical transmembrane passes span 7-27, 31-51, 63-83, and 93-113; these read IIWQYLRAFVLIYACLYAGIF, LLPVTIPGSIIGMLILFVLLA, GCYVLIRYMALLFVPIGVGVM, and FGPVVVSCAVSTLVVFLVVSW.

This sequence belongs to the UPF0299 family.

Its subcellular location is the cell inner membrane. This Shigella boydii serotype 4 (strain Sb227) protein is UPF0299 membrane protein YohJ.